Here is a 146-residue protein sequence, read N- to C-terminus: Hemoglobin subunit beta (146 aa).

Valine 1 carries the post-translational modification N-acetylvaline. The Globin domain occupies 2-146; it reads HLTDGEKNAL…VANALAHKYH (145 aa). Serine 44 carries the phosphoserine modification. Lysine 59 carries the N6-acetyllysine modification. Histidine 63 is a binding site for heme b. Lysine 82 carries the post-translational modification N6-acetyllysine. Residue histidine 92 coordinates heme b. S-nitrosocysteine is present on cysteine 93. At lysine 144 the chain carries N6-acetyllysine.

The protein belongs to the globin family. In terms of assembly, heterotetramer of two alpha chains and two beta chains. Red blood cells.

Involved in oxygen transport from the lung to the various peripheral tissues. The protein is Hemoglobin subunit beta of Otospermophilus beecheyi (California ground squirrel).